The sequence spans 647 residues: Acetyl-coenzyme A synthetase (647 aa).

CoA contacts are provided by residues 190 to 193, Thr308, and Asn332; that span reads RGGR. ATP contacts are provided by residues 384–386, 408–413, Asp497, and Arg512; these read GEP and DTWWQT. Ser520 serves as a coordination point for CoA. Residue Arg523 coordinates ATP. Residues Val534, His536, and Val539 each coordinate Mg(2+). Residue Arg581 participates in CoA binding. Residue Lys606 is modified to N6-acetyllysine.

It belongs to the ATP-dependent AMP-binding enzyme family. Mg(2+) serves as cofactor. In terms of processing, acetylated. Deacetylation by the SIR2-homolog deacetylase activates the enzyme.

The enzyme catalyses acetate + ATP + CoA = acetyl-CoA + AMP + diphosphate. Functionally, catalyzes the conversion of acetate into acetyl-CoA (AcCoA), an essential intermediate at the junction of anabolic and catabolic pathways. AcsA undergoes a two-step reaction. In the first half reaction, AcsA combines acetate with ATP to form acetyl-adenylate (AcAMP) intermediate. In the second half reaction, it can then transfer the acetyl group from AcAMP to the sulfhydryl group of CoA, forming the product AcCoA. This Parvibaculum lavamentivorans (strain DS-1 / DSM 13023 / NCIMB 13966) protein is Acetyl-coenzyme A synthetase.